We begin with the raw amino-acid sequence, 860 residues long: Leucine--tRNA ligase (860 aa).

The short motif at 42-52 is the 'HIGH' region element; sequence PYPSGRLHMGH. Residues 619 to 623 carry the 'KMSKS' region motif; the sequence is KMSKS. Lysine 622 serves as a coordination point for ATP.

Belongs to the class-I aminoacyl-tRNA synthetase family.

Its subcellular location is the cytoplasm. It catalyses the reaction tRNA(Leu) + L-leucine + ATP = L-leucyl-tRNA(Leu) + AMP + diphosphate. The protein is Leucine--tRNA ligase of Photorhabdus laumondii subsp. laumondii (strain DSM 15139 / CIP 105565 / TT01) (Photorhabdus luminescens subsp. laumondii).